Here is a 199-residue protein sequence, read N- to C-terminus: Protein-methionine-sulfoxide reductase heme-binding subunit MsrQ (199 aa).

A run of 5 helical transmembrane segments spans residues V13–G33, L79–E99, L120–M140, W147–W167, and V169–F189.

Belongs to the MsrQ family. As to quaternary structure, heterodimer of a catalytic subunit (MsrP) and a heme-binding subunit (MsrQ). It depends on FMN as a cofactor. Requires heme b as cofactor.

It localises to the cell inner membrane. Functionally, part of the MsrPQ system that repairs oxidized periplasmic proteins containing methionine sulfoxide residues (Met-O), using respiratory chain electrons. Thus protects these proteins from oxidative-stress damage caused by reactive species of oxygen and chlorine generated by the host defense mechanisms. MsrPQ is essential for the maintenance of envelope integrity under bleach stress, rescuing a wide series of structurally unrelated periplasmic proteins from methionine oxidation. MsrQ provides electrons for reduction to the reductase catalytic subunit MsrP, using the quinone pool of the respiratory chain. The sequence is that of Protein-methionine-sulfoxide reductase heme-binding subunit MsrQ from Pectobacterium carotovorum subsp. carotovorum (strain PC1).